We begin with the raw amino-acid sequence, 568 residues long: Phosphoribosylaminoimidazole carboxylase (568 aa).

Residues 110–298 (KNHLIKHDVA…QFEAHVRAVT (189 aa)) form the ATP-grasp domain. 138-193 (GEKFGYPYMLKSRTLAYDGRGNFVVKDKSYCEKALEFLKDRPLYAEKWCPFTKELA) contacts ATP.

It in the C-terminal section; belongs to the AIR carboxylase family. Class I subfamily.

It carries out the reaction 5-amino-1-(5-phospho-D-ribosyl)imidazole-4-carboxylate + H(+) = 5-amino-1-(5-phospho-beta-D-ribosyl)imidazole + CO2. Its pathway is purine metabolism; IMP biosynthesis via de novo pathway; 5-amino-1-(5-phospho-D-ribosyl)imidazole-4-carboxylate from 5-amino-1-(5-phospho-D-ribosyl)imidazole (carboxylase route): step 1/1. The protein is Phosphoribosylaminoimidazole carboxylase (ADE2) of Candida albicans (strain SC5314 / ATCC MYA-2876) (Yeast).